The sequence spans 320 residues: UDP-N-acetylenolpyruvoylglucosamine reductase (320 aa).

Positions 34-200 (RAGGLAEVFF…TSAVFEGFAE (167 aa)) constitute an FAD-binding PCMH-type domain. Arginine 180 is an active-site residue. Serine 229 (proton donor) is an active-site residue. Residue glutamate 299 is part of the active site.

It belongs to the MurB family. Requires FAD as cofactor.

The protein resides in the cytoplasm. The enzyme catalyses UDP-N-acetyl-alpha-D-muramate + NADP(+) = UDP-N-acetyl-3-O-(1-carboxyvinyl)-alpha-D-glucosamine + NADPH + H(+). It functions in the pathway cell wall biogenesis; peptidoglycan biosynthesis. In terms of biological role, cell wall formation. This is UDP-N-acetylenolpyruvoylglucosamine reductase from Mesorhizobium japonicum (strain LMG 29417 / CECT 9101 / MAFF 303099) (Mesorhizobium loti (strain MAFF 303099)).